Reading from the N-terminus, the 396-residue chain is Peptide chain release factor 1, mitochondrial (396 aa).

Position 268 is an N5-methylglutamine (glutamine 268). Residues leucine 317 to isoleucine 340 are disordered.

The protein belongs to the prokaryotic/mitochondrial release factor family. In terms of processing, methylation of glutamine in the GGQ triplet is conserved from bacteria to mammals.

It is found in the mitochondrion. Its function is as follows. Mitochondrial peptide chain release factor that directs the termination of translation in response to the peptide chain termination codons UAA and UAG. The sequence is that of Peptide chain release factor 1, mitochondrial (MRF1) from Kluyveromyces lactis (strain ATCC 8585 / CBS 2359 / DSM 70799 / NBRC 1267 / NRRL Y-1140 / WM37) (Yeast).